Here is a 218-residue protein sequence, read N- to C-terminus: MFALKSILVTSLITSTALAHFTLDYPQSRGFVDDTENQFCGGFNTVEARQPFPLGSGPVHIDSHHALATIVAFISTSSNPTSFDDFNTTSNGTAIPLASSIFQVPQGEKCFNIDLQSLNVGLTNGSEVTLQIQYDGGDGNLYQCSDLVLIEGYEVPSNETCTNDASKASNATSTSSGSATATSAAATSSSSGTSGAIKEVVGFGALSLALGIAGLIIL.

An N-terminal signal peptide occupies residues 1–19; it reads MFALKSILVTSLITSTALA. 2 residues coordinate Cu(2+): histidine 20 and histidine 65. 3 N-linked (GlcNAc...) asparagine glycosylation sites follow: asparagine 87, asparagine 91, and asparagine 124. Aspartate 138 contributes to the Cu(2+) binding site. N-linked (GlcNAc...) asparagine glycosylation is found at asparagine 158 and asparagine 170. The tract at residues 160–194 is disordered; sequence TCTNDASKASNATSTSSGSATATSAAATSSSSGTS. The segment covering 165 to 194 has biased composition (low complexity); that stretch reads ASKASNATSTSSGSATATSAAATSSSSGTS. Serine 190 carries the GPI-anchor amidated serine lipid modification. Positions 191-218 are cleaved as a propeptide — removed in mature form; sequence SGTSGAIKEVVGFGALSLALGIAGLIIL.

It belongs to the X325 family. As to quaternary structure, interacts with the CUF1-dependent copper transporter CTR1. It depends on Cu(2+) as a cofactor.

The protein resides in the cell membrane. In terms of biological role, lytic polysaccharide monooxygenase-like protein that has diverged to biological functions other than polysaccharide degradation since it does not perform oxidative cleavage of polysaccharides. Cell surface-bound protein that functions in the copper-accumulation pathway shared by the CUF1-dependent copper transporter CTR1. Involved in maintaining cell wall integrity during copper deficiency. Binds Cu(2+) with an estimated 1:1 stoichiometry and might serve as an extracellular copper ligand. FRE4 and FRE7 metalloreductases probably function together with CTR1 and BIM1 to liberate the Cu(2+) bound to the BIM1 copper-binding site for subsequent import of Cu(+) into the cell by CTR1, via the reduction of BIM1-bound Cu(2+) to Cu(+) to reduce binding affinity for BIM1 but increase affinity for CTR1. Facilitates copper acquisition in the brain of mammalian hosts and acts as a copper-dependent virulence trait in fungal meningitis. While BIM1 plays a critical role in cryptococcal meningitis, at least in part through its role in copper acquisition, it could play additional roles during copper limitation or as a means to invade and colonize host tissues in the brain, by compromising host carbohydrate integrity via its lytic polysaccharide monooxygenase (LPMO) activity, which has still to be determined. The sequence is that of Copper acquisition factor BIM1 from Cryptococcus neoformans var. grubii serotype A (strain H99 / ATCC 208821 / CBS 10515 / FGSC 9487) (Filobasidiella neoformans var. grubii).